The sequence spans 281 residues: Phosphatidylglycerol--prolipoprotein diacylglyceryl transferase (281 aa).

4 helical membrane passes run 23–43 (IGPL…LFAW), 71–91 (FVIW…VLFY), 107–127 (WDGG…MILF), and 133–153 (ILVW…LGVV). Arg154 is an a 1,2-diacyl-sn-glycero-3-phospho-(1'-sn-glycerol) binding site. 3 helical membrane-spanning segments follow: residues 189–209 (LYEA…LVWG), 217–237 (GFVA…VEFF), and 247–267 (LFGG…LLGL).

This sequence belongs to the Lgt family.

It localises to the cell inner membrane. It catalyses the reaction L-cysteinyl-[prolipoprotein] + a 1,2-diacyl-sn-glycero-3-phospho-(1'-sn-glycerol) = an S-1,2-diacyl-sn-glyceryl-L-cysteinyl-[prolipoprotein] + sn-glycerol 1-phosphate + H(+). Its pathway is protein modification; lipoprotein biosynthesis (diacylglyceryl transfer). In terms of biological role, catalyzes the transfer of the diacylglyceryl group from phosphatidylglycerol to the sulfhydryl group of the N-terminal cysteine of a prolipoprotein, the first step in the formation of mature lipoproteins. This is Phosphatidylglycerol--prolipoprotein diacylglyceryl transferase from Brucella canis (strain ATCC 23365 / NCTC 10854 / RM-666).